We begin with the raw amino-acid sequence, 860 residues long: Leucine--tRNA ligase (860 aa).

Positions 42–52 match the 'HIGH' region motif; sequence PYPSGRLHMGH. The 'KMSKS' region motif lies at 619-623; that stretch reads KMSKS. Lysine 622 is an ATP binding site.

The protein belongs to the class-I aminoacyl-tRNA synthetase family.

It is found in the cytoplasm. It catalyses the reaction tRNA(Leu) + L-leucine + ATP = L-leucyl-tRNA(Leu) + AMP + diphosphate. The chain is Leucine--tRNA ligase from Sodalis glossinidius (strain morsitans).